Here is a 428-residue protein sequence, read N- to C-terminus: Cell division cycle 20.6, cofactor of APC complex (428 aa).

WD repeat units lie at residues 106 to 145 (WFLT…TSKL), 150 to 189 (DENG…HVRT), 193 to 230 (GHES…SIIG), 234 to 273 (GHTE…SNPT), 282 to 324 (EHTA…CLNS), 326 to 367 (ETGS…KMAE), and 370 to 409 (GHTS…PKTT).

This sequence belongs to the WD repeat CDC20/Fizzy family. In terms of assembly, the APC/C is composed of at least 11 subunits that stay tightly associated throughout the cell cycle.

It is found in the nucleus. It functions in the pathway protein modification; protein ubiquitination. Functionally, component of the anaphase promoting complex/cyclosome (APC/C), a cell cycle-regulated E3 ubiquitin-protein ligase complex that controls progression through mitosis and the G1 phase of the cell cycle. In Arabidopsis thaliana (Mouse-ear cress), this protein is Cell division cycle 20.6, cofactor of APC complex (CDC20-6).